A 732-amino-acid chain; its full sequence is Elongation factor 2 (732 aa).

Residues glutamate 19–leucine 260 enclose the tr-type G domain. GTP is bound by residues alanine 28–threonine 35, aspartate 94–histidine 98, and asparagine 148–aspartate 151. A Diphthamide modification is found at histidine 597.

The protein belongs to the TRAFAC class translation factor GTPase superfamily. Classic translation factor GTPase family. EF-G/EF-2 subfamily.

The protein localises to the cytoplasm. Catalyzes the GTP-dependent ribosomal translocation step during translation elongation. During this step, the ribosome changes from the pre-translocational (PRE) to the post-translocational (POST) state as the newly formed A-site-bound peptidyl-tRNA and P-site-bound deacylated tRNA move to the P and E sites, respectively. Catalyzes the coordinated movement of the two tRNA molecules, the mRNA and conformational changes in the ribosome. The polypeptide is Elongation factor 2 (Thermococcus onnurineus (strain NA1)).